Consider the following 774-residue polypeptide: Lysyl oxidase homolog 2 (774 aa).

A signal peptide spans 1-25 (MERPLCSHLCSCLAVLALLSPLSLA). SRCR domains follow at residues 58–159 (LRLA…VVCS), 188–302 (IRAI…VSCV), 326–425 (VRLR…VRCN), and 435–544 (LRLN…VACS). Cystine bridges form between C84–C148, C97–C158, C128–C138, C218–C291, C231–C301, C265–C275, C351–C414, C364–C424, and C395–C405. N-linked (GlcNAc...) asparagine glycosylation occurs at N288. An N-linked (GlcNAc...) asparagine glycan is attached at N455. 3 cysteine pairs are disulfide-bonded: C464/C530, C477/C543, and C511/C521. Positions 548–751 (PDLVLNAEMV…WMYNCHIGGS (204 aa)) are lysyl-oxidase like. Ca(2+)-binding residues include D549 and L550. 4 disulfides stabilise this stretch: C573–C625, C579–C695, C657–C673, and C663–C685. Cu cation-binding residues include H626, H628, and H630. An N-linked (GlcNAc...) asparagine glycan is attached at N644. Positions 653–689 (KASFCLEDTECEGDIQKNYECANFGDQGITMGCWDMY) form a cross-link, lysine tyrosylquinone (Lys-Tyr). Y689 carries the post-translational modification 2',4',5'-topaquinone. Residues E722, D724, N727, and N728 each coordinate Ca(2+). A disulfide bridge connects residues C732 and C746.

Belongs to the lysyl oxidase family. In terms of assembly, component of some chromatin repressor complex. Interacts with SNAI1. Interacts with TAF10. Interacts with HSPA5. Interacts with EFEMP2. Cu cation is required as a cofactor. Lysine tyrosylquinone residue serves as cofactor. Post-translationally, the lysine tyrosylquinone cross-link (LTQ) is generated by condensation of the epsilon-amino group of a lysine with a topaquinone produced by oxidation of tyrosine. N-glycosylated. N-glycosylation on Asn-455 and Asn-644 may be essential for proper folding and secretion; may be composed of a fucosylated carbohydrates attached to a trimannose N-linked glycan core.

The protein resides in the secreted. The protein localises to the extracellular space. It localises to the extracellular matrix. Its subcellular location is the basement membrane. It is found in the nucleus. The protein resides in the chromosome. The protein localises to the endoplasmic reticulum. It carries out the reaction L-lysyl-[protein] + O2 + H2O = (S)-2-amino-6-oxohexanoyl-[protein] + H2O2 + NH4(+). Specifically inhibited by a mouse monoclonal antibody AB0023, inhibition occurs in a non-competitive manner. Mediates the post-translational oxidative deamination of lysine residues on target proteins leading to the formation of deaminated lysine (allysine). Acts as a transcription corepressor and specifically mediates deamination of trimethylated 'Lys-4' of histone H3 (H3K4me3), a specific tag for epigenetic transcriptional activation. Shows no activity against histone H3 when it is trimethylated on 'Lys-9' (H3K9me3) or 'Lys-27' (H3K27me3) or when 'Lys-4' is monomethylated (H3K4me1) or dimethylated (H3K4me2). Also mediates deamination of methylated TAF10, a member of the transcription factor IID (TFIID) complex, which induces release of TAF10 from promoters, leading to inhibition of TFIID-dependent transcription. LOXL2-mediated deamination of TAF10 results in transcriptional repression of genes required for embryonic stem cell pluripotency including POU5F1/OCT4, NANOG, KLF4 and SOX2. Involved in epithelial to mesenchymal transition (EMT) via interaction with SNAI1 and participates in repression of E-cadherin CDH1, probably by mediating deamination of histone H3. During EMT, involved with SNAI1 in negatively regulating pericentromeric heterochromatin transcription. SNAI1 recruits LOXL2 to pericentromeric regions to oxidize histone H3 and repress transcription which leads to release of heterochromatin component CBX5/HP1A, enabling chromatin reorganization and acquisition of mesenchymal traits. Interacts with the endoplasmic reticulum protein HSPA5 which activates the IRE1-XBP1 pathway of the unfolded protein response, leading to expression of several transcription factors involved in EMT and subsequent EMT induction. When secreted into the extracellular matrix, promotes cross-linking of extracellular matrix proteins by mediating oxidative deamination of peptidyl lysine residues in precursors to fibrous collagen and elastin. Acts as a regulator of sprouting angiogenesis, probably via collagen IV scaffolding. Acts as a regulator of chondrocyte differentiation, probably by regulating expression of factors that control chondrocyte differentiation. The chain is Lysyl oxidase homolog 2 (LOXL2) from Pongo abelii (Sumatran orangutan).